The chain runs to 279 residues: Pleckstrin homology domain-containing family F member 1 (279 aa).

Positions 35-131 constitute a PH domain; the sequence is VLLGEGVLTK…WISHIEECVR (97 aa). The segment at 152–212 adopts an FYVE-type zinc-finger fold; sequence DKATDICMRC…VCSLCYRELA (61 aa). Residues cysteine 158, cysteine 161, cysteine 175, cysteine 178, cysteine 183, cysteine 186, cysteine 204, and cysteine 207 each coordinate Zn(2+). A disordered region spans residues 218–264; that stretch reads EEAEEQGAGSPGQPAHLARPICGASSGDDDDSDEDKEGSRDGDWPSS. Residues 244-253 are compositionally biased toward acidic residues; it reads GDDDDSDEDK.

Highly expressed in heart and skeletal muscle. Weakly expressed in brain, thymus, spleen, kidney, liver, small intestine, placenta and lung.

The protein resides in the nucleus. The protein localises to the cytoplasm. It is found in the perinuclear region. Its subcellular location is the lysosome. Its function is as follows. May induce apoptosis through the lysosomal-mitochondrial pathway. Translocates to the lysosome initiating the permeabilization of lysosomal membrane (LMP) and resulting in the release of CTSD and CTSL to the cytoplasm. Triggers the caspase-independent apoptosis by altering mitochondrial membrane permeabilization (MMP) resulting in the release of PDCD8. This is Pleckstrin homology domain-containing family F member 1 (PLEKHF1) from Homo sapiens (Human).